Here is a 167-residue protein sequence, read N- to C-terminus: Leptin (167 aa).

Positions Met1 to Ala21 are cleaved as a signal peptide. Residues Cys117 and Cys167 are joined by a disulfide bond.

Belongs to the leptin family. Interacts with SIGLEC6. As to expression, adipose tissue is the main source of leptin. It is also produced by other peripheral tissues such as the skeletal muscle. Expressed by intercalated and striated tracts of submandibular and parotid salivary gland intralobular ducts. Detected by fundic epithelium of the gastric mucosa. Secreted into blood and gastric juice.

The protein localises to the secreted. Its function is as follows. Key player in the regulation of energy balance and body weight control. Once released into the circulation, has central and peripheral effects by binding LEPR, found in many tissues, which results in the activation of several major signaling pathways. In the hypothalamus, acts as an appetite-regulating factor that induces a decrease in food intake and an increase in energy consumption by inducing anorexinogenic factors and suppressing orexigenic neuropeptides, also regulates bone mass and secretion of hypothalamo-pituitary-adrenal hormones. In the periphery, increases basal metabolism, influences reproductive function, regulates pancreatic beta-cell function and insulin secretion, is pro-angiogenic for endothelial cell and affects innate and adaptive immunity. In the arcuate nucleus of the hypothalamus, activates by depolarization POMC neurons inducing FOS and SOCS3 expression to release anorexigenic peptides and inhibits by hyperpolarization NPY neurons inducing SOCS3 with a consequent reduction on release of orexigenic peptides. In addition to its known satiety inducing effect, has a modulatory role in nutrient absorption. In the intestine, reduces glucose absorption by enterocytes by activating PKC and leading to a sequential activation of p38, PI3K and ERK signaling pathways which exerts an inhibitory effect on glucose absorption. Acts as a growth factor on certain tissues, through the activation of different signaling pathways increases expression of genes involved in cell cycle regulation such as CCND1, via JAK2-STAT3 pathway, or VEGFA, via MAPK1/3 and PI3K-AKT1 pathways. May also play an apoptotic role via JAK2-STAT3 pathway and up-regulation of BIRC5 expression. Pro-angiogenic, has mitogenic activity on vascular endothelial cells and plays a role in matrix remodeling by regulating the expression of matrix metalloproteinases (MMPs) and tissue inhibitors of metalloproteinases (TIMPs). In innate immunity, modulates the activity and function of neutrophils by increasing chemotaxis and the secretion of oxygen radicals. Increases phagocytosis by macrophages and enhances secretion of pro-inflammatory mediators. Increases cytotoxic ability of NK cells. Plays a pro-inflammatory role, in synergy with IL1B, by inducing NOS2 which promotes the production of IL6, IL8 and Prostaglandin E2, through a signaling pathway that involves JAK2, PI3K, MAP2K1/MEK1 and MAPK14/p38. In adaptive immunity, promotes the switch of memory T-cells towards T helper-1 cell immune responses. Increases CD4(+)CD25(-) T-cell proliferation and reduces autophagy during TCR (T-cell receptor) stimulation, through MTOR signaling pathway activation and BCL2 up-regulation. The chain is Leptin from Homo sapiens (Human).